A 381-amino-acid polypeptide reads, in one-letter code: GDP-mannose transporter (381 aa).

Topologically, residues 1–44 (MAEGKKTDDYTIQMDSIDQGNKSFEAPPPPQPRSPPSGSLSNNP) are cytoplasmic. The interval 19–41 (QGNKSFEAPPPPQPRSPPSGSLS) is disordered. Residues 26–35 (APPPPQPRSP) are compositionally biased toward pro residues. A helical transmembrane segment spans residues 45–65 (ILPVLAYCGSSILMTVMNKYV). Topologically, residues 66 to 70 (LSGTD) are lumenal. Residues 71–91 (FNLNFFLLCIQSLVCIIAIQT) form a helical membrane-spanning segment. The Cytoplasmic portion of the chain corresponds to 92–109 (CKSCGLITYRDFSADEAR). The chain crosses the membrane as a helical span at residues 110 to 126 (KWFPITLLLIGMIYTGS). The Lumenal portion of the chain corresponds to 127–133 (KALQFLS). Residues 134–150 (IPVYTIFKNLTIILIAY) form a helical membrane-spanning segment. The Cytoplasmic portion of the chain corresponds to 151-159 (GEVLWFGGS). The helical transmembrane segment at 160 to 181 (VTGLTLFSFGLMVLSSIIAAWA) threads the bilayer. Over 182 to 199 (DIKHAVESNGDATAKVST) the chain is Lumenal. A helical transmembrane segment spans residues 200–220 (LNAGYIWMLVNCLCTSSYVLG). The Cytoplasmic segment spans residues 221–234 (MRKRIKLTNFKDFD). The chain crosses the membrane as a helical span at residues 235-255 (TMFYNNLLSIPVLIVLSAFLE). Residues 256–273 (DWSSTNVNRNFPPMDRNS) are Lumenal-facing. Residues 274–294 (IVFAMILSGLSSVFISYTSAW) form a helical membrane-spanning segment. Topologically, residues 295 to 302 (CVRVTSST) are cytoplasmic. A helical membrane pass occupies residues 303 to 323 (TYSMVGALNKLPIAISGLIFF). Residues 324-326 (DAP) lie on the Lumenal side of the membrane. A helical transmembrane segment spans residues 327 to 347 (VTFPSVSAIVVGFVSGIVYAV). Residues 348-381 (AKIKQNAKPRTGVLPTANPPVSASSQSMRDSLRS) are Cytoplasmic-facing. Positions 358–381 (TGVLPTANPPVSASSQSMRDSLRS) are disordered. Residues 366 to 381 (PPVSASSQSMRDSLRS) show a composition bias toward polar residues.

This sequence belongs to the TPT transporter family. SLC35D subfamily. In terms of assembly, homooligomer.

It localises to the golgi apparatus membrane. Its subcellular location is the cytoplasmic vesicle membrane. It is found in the endoplasmic reticulum membrane. Involved in the import of GDP-mannose from the cytoplasm into the Golgi lumen. This is GDP-mannose transporter (gmt1) from Aspergillus niger (strain ATCC MYA-4892 / CBS 513.88 / FGSC A1513).